Reading from the N-terminus, the 80-residue chain is Small ribosomal subunit protein uS17 (80 aa).

It belongs to the universal ribosomal protein uS17 family. In terms of assembly, part of the 30S ribosomal subunit.

One of the primary rRNA binding proteins, it binds specifically to the 5'-end of 16S ribosomal RNA. The sequence is that of Small ribosomal subunit protein uS17 from Beijerinckia indica subsp. indica (strain ATCC 9039 / DSM 1715 / NCIMB 8712).